The primary structure comprises 375 residues: 23S rRNA (uracil(747)-C(5))-methyltransferase RlmC (375 aa).

Positions 3, 11, 14, and 87 each coordinate [4Fe-4S] cluster. S-adenosyl-L-methionine contacts are provided by Gln212, Phe241, Glu262, and Asn307. The active-site Nucleophile is Cys334.

It belongs to the class I-like SAM-binding methyltransferase superfamily. RNA M5U methyltransferase family. RlmC subfamily.

The catalysed reaction is uridine(747) in 23S rRNA + S-adenosyl-L-methionine = 5-methyluridine(747) in 23S rRNA + S-adenosyl-L-homocysteine + H(+). Its function is as follows. Catalyzes the formation of 5-methyl-uridine at position 747 (m5U747) in 23S rRNA. The sequence is that of 23S rRNA (uracil(747)-C(5))-methyltransferase RlmC from Escherichia coli O9:H4 (strain HS).